A 132-amino-acid polypeptide reads, in one-letter code: MFSNISNQKLVLFFTIILIALCPFVYYLWDNEILGIGNWGRKRKDTFEDKNCSTEIEHAIEEHKRKNKEKKEAKEKRLAPGRVKISTYDVNNENYLLGDVNDELQPNIPGYLTKETAYPFDCEPDDRSNRWL.

The helical transmembrane segment at 10–30 (LVLFFTIILIALCPFVYYLWD) threads the bilayer. Residues 50–79 (KNCSTEIEHAIEEHKRKNKEKKEAKEKRLA) adopt a coiled-coil conformation.

The protein localises to the membrane. This is an uncharacterized protein from Invertebrate iridescent virus 6 (IIV-6).